The following is a 598-amino-acid chain: UvrABC system protein C (598 aa).

A GIY-YIG domain is found at 14-91 (DSPGCYLHKD…IQKNMPKYNI (78 aa)). The UVR domain occupies 196–231 (DKIIEDLRSKMLAASEEMAFERAAEYRDLISGIATM).

It belongs to the UvrC family. As to quaternary structure, interacts with UvrB in an incision complex.

The protein resides in the cytoplasm. Its function is as follows. The UvrABC repair system catalyzes the recognition and processing of DNA lesions. UvrC both incises the 5' and 3' sides of the lesion. The N-terminal half is responsible for the 3' incision and the C-terminal half is responsible for the 5' incision. The chain is UvrABC system protein C from Streptococcus pyogenes serotype M5 (strain Manfredo).